The primary structure comprises 1050 residues: Atrial natriuretic peptide receptor 2 (1050 aa).

The first 19 residues, 1–19 (MDLGHSLFVVFTCFLMARC), serve as a signal peptide directing secretion. The Extracellular segment spans residues 20–460 (RTEIGKNITV…FCNEDQLPVL (441 aa)). Residues asparagine 26 and asparagine 74 are each glycosylated (N-linked (GlcNAc...) asparagine). Residues cysteine 84 and cysteine 110 are joined by a disulfide bond. Residues asparagine 169, asparagine 203, asparagine 285, asparagine 352, asparagine 366, and asparagine 415 are each glycosylated (N-linked (GlcNAc...) asparagine). Cysteine 236 and cysteine 339 are joined by a disulfide. Residues 461–481 (GIVAVGSGLALIIFGISSFLI) traverse the membrane as a helical segment. The Cytoplasmic segment spans residues 482–1050 (YRKLKLEKEL…LGEKTDVYVI (569 aa)). The Protein kinase domain occupies 517 to 790 (SRLTISQRGS…PDFSYIKIFV (274 aa)). The Guanylate cyclase domain maps to 865–995 (TIYFSDIVGF…DTVNTASRME (131 aa)).

It belongs to the adenylyl cyclase class-4/guanylyl cyclase family. In terms of processing, phosphorylated. Phosphorylation of the protein kinase-like domain is required for full activation by CNP. Glycosylated. High levels found in liver, atrium and gill. Moderate levels found in brain and ventricle, and low levels in esophageal sphincter, stomach, posterior intestine and kidney.

The protein resides in the cell membrane. It carries out the reaction GTP = 3',5'-cyclic GMP + diphosphate. Its function is as follows. Receptor for the C-type natriuretic peptide NPPC/CNP hormone. Has guanylate cyclase activity upon binding of its ligand. May play a role in the regulation of skeletal growth. The polypeptide is Atrial natriuretic peptide receptor 2 (npr2) (Anguilla japonica (Japanese eel)).